Consider the following 233-residue polypeptide: Large ribosomal subunit protein uL1 (233 aa).

Belongs to the universal ribosomal protein uL1 family. In terms of assembly, part of the 50S ribosomal subunit.

Its function is as follows. Binds directly to 23S rRNA. The L1 stalk is quite mobile in the ribosome, and is involved in E site tRNA release. Protein L1 is also a translational repressor protein, it controls the translation of the L11 operon by binding to its mRNA. In Shewanella piezotolerans (strain WP3 / JCM 13877), this protein is Large ribosomal subunit protein uL1.